Reading from the N-terminus, the 561-residue chain is Acylcarnitine hydrolase (561 aa).

A signal peptide spans 1-26 (MARKQPHSWLNAVLFGLLLILIHVWG). Cysteine 97 and cysteine 125 are oxidised to a cystine. Residue serine 230 is the Acyl-ester intermediate of the active site. Cysteine 282 and cysteine 293 are disulfide-bonded. Residues glutamate 347 and histidine 459 each act as charge relay system in the active site.

The protein belongs to the type-B carboxylesterase/lipase family. In terms of tissue distribution, expressed in liver, stomach and kidney.

It is found in the microsome. It localises to the endoplasmic reticulum. It carries out the reaction all-trans-retinyl hexadecanoate + H2O = all-trans-retinol + hexadecanoate + H(+). It catalyses the reaction an O-acyl-(R)-carnitine + H2O = (R)-carnitine + a fatty acid + H(+). Functionally, hydrolase with high activity towards palmitoylcarnitine. Is also active with p-nitrophenylacetate and alpha-naphthylacetate. May also hydrolyze retinyl esters. This chain is Acylcarnitine hydrolase, found in Rattus norvegicus (Rat).